We begin with the raw amino-acid sequence, 149 residues long: Large ribosomal subunit protein eL19 (149 aa).

Residues 67–90 (KRKLQKRKGRRRGHGSRKGAKGAR) form a disordered region.

The protein belongs to the eukaryotic ribosomal protein eL19 family. Part of the 50S ribosomal subunit.

Binds to the 23S rRNA. In Archaeoglobus fulgidus (strain ATCC 49558 / DSM 4304 / JCM 9628 / NBRC 100126 / VC-16), this protein is Large ribosomal subunit protein eL19.